A 264-amino-acid polypeptide reads, in one-letter code: Protein OXIDATIVE STRESS 3 LIKE 1 (264 aa).

Disordered stretches follow at residues 1-76 (MDCV…GPLE) and 178-225 (TGEG…QGSF). The span at 29–43 (PSDSSSSPSSSASSS) shows a compositional bias: low complexity. The segment covering 47–56 (NSDDGEKSSE) has biased composition (basic and acidic residues). A compositionally biased stretch (acidic residues) spans 57–67 (DGGDDAGENEV). Residues 179 to 201 (GEGSSSGGDSSPGSSPTTSGSPP) are compositionally biased toward low complexity. Basic residues predominate over residues 203–212 (QLHHHQHQMK).

It is found in the nucleus. Its function is as follows. Promotes slightly the tolerance to zinc (Zn) and to oxidizing chemicals (e.g. diamide). This Arabidopsis thaliana (Mouse-ear cress) protein is Protein OXIDATIVE STRESS 3 LIKE 1.